The primary structure comprises 64 residues: MPKNKTHSGTAKRFRVTGSGKLRREQAGRRHILEKKSSRVTRRLEGTEAVAKADVKRINKLLGR.

A compositionally biased stretch (basic residues) spans 1–15 (MPKNKTHSGTAKRFR). The disordered stretch occupies residues 1 to 27 (MPKNKTHSGTAKRFRVTGSGKLRREQA).

This sequence belongs to the bacterial ribosomal protein bL35 family.

The chain is Large ribosomal subunit protein bL35 from Saccharopolyspora erythraea (strain ATCC 11635 / DSM 40517 / JCM 4748 / NBRC 13426 / NCIMB 8594 / NRRL 2338).